The primary structure comprises 100 residues: Large ribosomal subunit protein mL53 (100 aa).

This sequence belongs to the mitochondrion-specific ribosomal protein mL53 family. In terms of assembly, component of the mitochondrial large ribosomal subunit (mt-LSU). Mature yeast 74S mitochondrial ribosomes consist of a small (37S) and a large (54S) subunit. The 37S small subunit contains a 15S ribosomal RNA (15S mt-rRNA) and at least 32 different proteins. The 54S large subunit contains a 21S rRNA (21S mt-rRNA) and at least 45 different proteins.

The protein localises to the mitochondrion. Its function is as follows. Component of the mitochondrial ribosome (mitoribosome), a dedicated translation machinery responsible for the synthesis of mitochondrial genome-encoded proteins, including at least some of the essential transmembrane subunits of the mitochondrial respiratory chain. The mitoribosomes are attached to the mitochondrial inner membrane and translation products are cotranslationally integrated into the membrane. This chain is Large ribosomal subunit protein mL53 (mrpl44), found in Schizosaccharomyces pombe (strain 972 / ATCC 24843) (Fission yeast).